Here is a 149-residue protein sequence, read N- to C-terminus: 3-dehydroquinate dehydratase (149 aa).

The active-site Proton acceptor is the Tyr-26. Asn-77, His-83, and Asp-90 together coordinate substrate. His-103 (proton donor) is an active-site residue. Residues 104–105 and Arg-114 contribute to the substrate site; that span reads LS.

The protein belongs to the type-II 3-dehydroquinase family. Homododecamer.

The enzyme catalyses 3-dehydroquinate = 3-dehydroshikimate + H2O. Its pathway is metabolic intermediate biosynthesis; chorismate biosynthesis; chorismate from D-erythrose 4-phosphate and phosphoenolpyruvate: step 3/7. Its function is as follows. Catalyzes a trans-dehydration via an enolate intermediate. The polypeptide is 3-dehydroquinate dehydratase (Psychromonas ingrahamii (strain DSM 17664 / CCUG 51855 / 37)).